The primary structure comprises 289 residues: ATP synthase gamma chain (289 aa).

The protein belongs to the ATPase gamma chain family. In terms of assembly, F-type ATPases have 2 components, CF(1) - the catalytic core - and CF(0) - the membrane proton channel. CF(1) has five subunits: alpha(3), beta(3), gamma(1), delta(1), epsilon(1). CF(0) has three main subunits: a, b and c.

The protein resides in the cell inner membrane. In terms of biological role, produces ATP from ADP in the presence of a proton gradient across the membrane. The gamma chain is believed to be important in regulating ATPase activity and the flow of protons through the CF(0) complex. The polypeptide is ATP synthase gamma chain (Haemophilus influenzae (strain 86-028NP)).